A 428-amino-acid polypeptide reads, in one-letter code: Enolase (428 aa).

Q162 is a binding site for (2R)-2-phosphoglycerate. E204 (proton donor) is an active-site residue. 3 residues coordinate Mg(2+): D241, E283, and D310. 4 residues coordinate (2R)-2-phosphoglycerate: K335, R364, S365, and K386. Residue K335 is the Proton acceptor of the active site.

It belongs to the enolase family. It depends on Mg(2+) as a cofactor.

The protein localises to the cytoplasm. It is found in the secreted. It localises to the cell surface. The catalysed reaction is (2R)-2-phosphoglycerate = phosphoenolpyruvate + H2O. The protein operates within carbohydrate degradation; glycolysis; pyruvate from D-glyceraldehyde 3-phosphate: step 4/5. Its function is as follows. Catalyzes the reversible conversion of 2-phosphoglycerate (2-PG) into phosphoenolpyruvate (PEP). It is essential for the degradation of carbohydrates via glycolysis. The chain is Enolase from Rhodococcus jostii (strain RHA1).